The primary structure comprises 148 residues: Putative adenylate kinase (148 aa).

ATP-binding residues include glycine 9, glycine 11, lysine 12, serine 13, and threonine 14. The interval 28-44 is NMP; sequence EGNALAVKYGCLSGDEV. The segment at 91 to 101 is LID; the sequence is DRGYSPEKIDE. Arginine 92 lines the ATP pocket.

It belongs to the adenylate kinase family. AK6 subfamily. As to quaternary structure, interacts with uS11. Not a structural component of 40S pre-ribosomes, but transiently interacts with them by binding to uS11.

It catalyses the reaction AMP + ATP = 2 ADP. The catalysed reaction is ATP + H2O = ADP + phosphate + H(+). In terms of biological role, broad-specificity nucleoside monophosphate (NMP) kinase that catalyzes the reversible transfer of the terminal phosphate group between nucleoside triphosphates and monophosphates. Also has ATPase activity. Involved in the late maturation steps of the 30S ribosomal particles, specifically 16S rRNA maturation. While NMP activity is not required for ribosome maturation, ATPase activity is. Associates transiently with small ribosomal subunit protein uS11. ATP hydrolysis breaks the interaction with uS11. May temporarily remove uS11 from the ribosome to enable a conformational change of the ribosomal RNA that is needed for the final maturation step of the small ribosomal subunit. This is Putative adenylate kinase from Thermoplasma acidophilum (strain ATCC 25905 / DSM 1728 / JCM 9062 / NBRC 15155 / AMRC-C165).